A 700-amino-acid chain; its full sequence is Ribonucleoside-diphosphate reductase subunit alpha (700 aa).

Substrate contacts are provided by residues Thr-153, 169 to 170 (SC), Gly-198, 380 to 384 (NLCSE), and 580 to 584 (PTGSI). A disulfide bridge links Cys-170 with Cys-409. Asn-380 acts as the Proton acceptor in catalysis. Cys-382 (cysteine radical intermediate) is an active-site residue. Glu-384 acts as the Proton acceptor in catalysis.

Belongs to the ribonucleoside diphosphate reductase large chain family. As to quaternary structure, tetramer of two alpha and two beta subunits.

It catalyses the reaction a 2'-deoxyribonucleoside 5'-diphosphate + [thioredoxin]-disulfide + H2O = a ribonucleoside 5'-diphosphate + [thioredoxin]-dithiol. With respect to regulation, under complex allosteric control mediated by deoxynucleoside triphosphates and ATP binding. The type of nucleotide bound at the specificity site determines substrate preference. It seems probable that ATP makes the enzyme reduce CDP and UDP, dGTP favors ADP reduction and dTTP favors GDP reduction. Its function is as follows. Provides the precursors necessary for DNA synthesis. Catalyzes the biosynthesis of deoxyribonucleotides from the corresponding ribonucleotides. The chain is Ribonucleoside-diphosphate reductase subunit alpha from Bacillus subtilis (strain 168).